A 379-amino-acid polypeptide reads, in one-letter code: Oxidized polyvinyl alcohol hydrolase (379 aa).

The signal sequence occupies residues 1–23; that stretch reads MNQSLGVLRLTRGVIALALASVA. Catalysis depends on charge relay system residues serine 203 and serine 309.

It belongs to the peptidase S9A family. In terms of assembly, monomer.

It carries out the reaction nonane-4,6-dione + H2O = pentan-2-one + butanoate + H(+). Functionally, catalyzes the hydrolysis of 4,6-nonanedione, a beta-diketone compound. Also mediates hydrolysis of oxidized polyvinyl alcohol (PVA) in the second step in the degradation of polyvinyl alcohol. Not active toward the monoketone structure. The sequence is that of Oxidized polyvinyl alcohol hydrolase (pvaB) from Pseudomonas sp.